A 651-amino-acid chain; its full sequence is Beta-glucuronidase (651 aa).

The N-terminal stretch at 1 to 22 is a signal peptide; sequence MLRGPAAVWAALGPLLWACGLA. Residues N172 and N419 are each glycosylated (N-linked (GlcNAc...) asparagine). Catalysis depends on E450, which acts as the Proton donor. A glycan (N-linked (GlcNAc...) asparagine) is linked at N630.

This sequence belongs to the glycosyl hydrolase 2 family. Homotetramer.

The protein localises to the lysosome. The catalysed reaction is a beta-D-glucuronoside + H2O = D-glucuronate + an alcohol. Inhibited by L-aspartic acid. Plays an important role in the degradation of dermatan and keratan sulfates. In Felis catus (Cat), this protein is Beta-glucuronidase (GUSB).